A 266-amino-acid chain; its full sequence is 3-deoxy-manno-octulosonate cytidylyltransferase 1 (266 aa).

The protein belongs to the KdsB family.

The protein localises to the cytoplasm. The enzyme catalyses 3-deoxy-alpha-D-manno-oct-2-ulosonate + CTP = CMP-3-deoxy-beta-D-manno-octulosonate + diphosphate. Its pathway is nucleotide-sugar biosynthesis; CMP-3-deoxy-D-manno-octulosonate biosynthesis; CMP-3-deoxy-D-manno-octulosonate from 3-deoxy-D-manno-octulosonate and CTP: step 1/1. It participates in bacterial outer membrane biogenesis; lipopolysaccharide biosynthesis. Activates KDO (a required 8-carbon sugar) for incorporation into bacterial lipopolysaccharide in Gram-negative bacteria. The chain is 3-deoxy-manno-octulosonate cytidylyltransferase 1 from Paraburkholderia phytofirmans (strain DSM 17436 / LMG 22146 / PsJN) (Burkholderia phytofirmans).